Reading from the N-terminus, the 276-residue chain is Putative serine/threonine-protein kinase R436 (276 aa).

Residues 6–266 form the Protein kinase domain; that stretch reads YSLDKLIQNR…IKQKLNHFKT (261 aa). ATP is bound by residues 12-20 and K35; that span reads IQNRKSKRI. The Proton acceptor role is filled by D132.

The protein belongs to the protein kinase superfamily. Ser/Thr protein kinase family.

It catalyses the reaction L-seryl-[protein] + ATP = O-phospho-L-seryl-[protein] + ADP + H(+). The catalysed reaction is L-threonyl-[protein] + ATP = O-phospho-L-threonyl-[protein] + ADP + H(+). In Acanthamoeba polyphaga (Amoeba), this protein is Putative serine/threonine-protein kinase R436.